A 796-amino-acid chain; its full sequence is Striatin-3 (796 aa).

Met-1 bears the N-acetylmethionine mark. Positions 1–13 are enriched in gly residues; that stretch reads MDELAGGGGGGQG. The segment at 1–60 is disordered; the sequence is MDELAGGGGGGQGMAAPPRPQQGPGGNLSLPPGANGAPGGGGPPAAEAAGPPAGPELSRP. A caveolin-binding region spans residues 71–79; sequence YIQHEWARF. A coiled-coil region spans residues 77-136; the sequence is ARFEMERAHWEVERAELQARIAFLQGERKGQENLKKDLVRRIKMLEYALKQERAKYHKLK. Thr-150 is modified (phosphothreonine). The segment at 166–183 is calmodulin-binding; it reads QNSQLTWKQGRQLLRQYL. Ser-202, Ser-214, Ser-229, Ser-257, and Ser-334 each carry phosphoserine. Disordered regions lie at residues 252-271 and 311-335; these read ENAD…IPEG and EDGE…DLSP. A compositionally biased stretch (acidic residues) spans 253 to 264; it reads NADDSDEEENDM. 6 WD repeats span residues 477–516, 530–569, 583–622, 678–717, 720–759, and 766–795; these read SHFD…PAKK, AHIG…VDPY, AHTD…PCVC, QSSN…MIHS, AHLD…CVQE, and KLDE…AKVF.

Belongs to the WD repeat striatin family. Tetramerizes. Part of the core of STRIPAK complexes composed of PP2A catalytic and scaffolding subunits, the striatins (PP2A regulatory subunits), the striatin-associated proteins MOB4, STRIP1 and STRIP2, PDCD10 and members of the STE20 kinases, such as STK24 and STK26. The STRIPAK complex can be extended by adapter proteins such as SLMAP:SIKE1 or CTTNBP2NL. Interacts with CDC42BPB. Mainly expressed in the brain and muscles but is also detected at low levels in various tissues such as kidney, spleen and lung.

The protein localises to the cytoplasm. It is found in the membrane. Calmodulin-binding scaffolding protein which is the center of the striatin-interacting phosphatase and kinase (STRIPAK) complexes. STRIPAK complexes have critical roles in protein (de)phosphorylation and are regulators of multiple signaling pathways including Hippo, MAPK, nuclear receptor and cytoskeleton remodeling. Different types of STRIPAK complexes are involved in a variety of biological processes such as cell growth, differentiation, apoptosis, metabolism and immune regulation. In Mus musculus (Mouse), this protein is Striatin-3 (Strn3).